The primary structure comprises 136 residues: Large ribosomal subunit protein bL19 (136 aa).

Residues 1-23 (MEETVNNQETPETSEEETADEET) form a disordered region. Acidic residues predominate over residues 12–23 (ETSEEETADEET).

This sequence belongs to the bacterial ribosomal protein bL19 family.

Its function is as follows. This protein is located at the 30S-50S ribosomal subunit interface and may play a role in the structure and function of the aminoacyl-tRNA binding site. This Dehalococcoides mccartyi (strain ATCC BAA-2266 / KCTC 15142 / 195) (Dehalococcoides ethenogenes (strain 195)) protein is Large ribosomal subunit protein bL19.